The following is a 313-amino-acid chain: ADP-L-glycero-D-manno-heptose-6-epimerase (313 aa).

NADP(+) is bound by residues 10–11, 31–32, Lys-38, Arg-53, 75–79, and Asn-92; these read MI, DN, and EGACS. Tyr-139 serves as the catalytic Proton acceptor. Residue Lys-143 participates in NADP(+) binding. Asn-174 lines the substrate pocket. NADP(+) contacts are provided by Val-175 and Lys-183. Catalysis depends on Lys-183, which acts as the Proton acceptor. Residues Ser-185, His-192, 206–209, Arg-214, and Tyr-277 contribute to the substrate site; that span reads FEGS.

It belongs to the NAD(P)-dependent epimerase/dehydratase family. HldD subfamily. In terms of assembly, homopentamer. It depends on NADP(+) as a cofactor.

It catalyses the reaction ADP-D-glycero-beta-D-manno-heptose = ADP-L-glycero-beta-D-manno-heptose. It functions in the pathway nucleotide-sugar biosynthesis; ADP-L-glycero-beta-D-manno-heptose biosynthesis; ADP-L-glycero-beta-D-manno-heptose from D-glycero-beta-D-manno-heptose 7-phosphate: step 4/4. It participates in bacterial outer membrane biogenesis; LPS core biosynthesis. Functionally, catalyzes the interconversion between ADP-D-glycero-beta-D-manno-heptose and ADP-L-glycero-beta-D-manno-heptose via an epimerization at carbon 6 of the heptose. The protein is ADP-L-glycero-D-manno-heptose-6-epimerase of Vibrio parahaemolyticus serotype O3:K6 (strain RIMD 2210633).